Reading from the N-terminus, the 779-residue chain is Catalase-peroxidase (779 aa).

The segment at residues 148-270 is a cross-link (tryptophyl-tyrosyl-methioninium (Trp-Tyr) (with M-296)); sequence WHSAGTYRIT…LGAVQMGLIY (123 aa). The active-site Proton acceptor is the histidine 149. The tryptophyl-tyrosyl-methioninium (Tyr-Met) (with W-148) cross-link spans 270-296; sequence YVNPEGPNGKPDPIAAAKDIRETFFRM. Histidine 311 contributes to the heme b binding site.

The protein belongs to the peroxidase family. Peroxidase/catalase subfamily. As to quaternary structure, homodimer or homotetramer. The cofactor is heme b. Formation of the three residue Trp-Tyr-Met cross-link is important for the catalase, but not the peroxidase activity of the enzyme.

The enzyme catalyses H2O2 + AH2 = A + 2 H2O. It catalyses the reaction 2 H2O2 = O2 + 2 H2O. Bifunctional enzyme with both catalase and broad-spectrum peroxidase activity. This is Catalase-peroxidase from Bradyrhizobium diazoefficiens (strain JCM 10833 / BCRC 13528 / IAM 13628 / NBRC 14792 / USDA 110).